A 593-amino-acid chain; its full sequence is ATPase family AAA domain-containing protein 3-A (593 aa).

The segment at 1–64 (MSWLFGLNKG…AKAARELDQS (64 aa)) is disordered. Over 1-242 (MSWLFGLNKG…FRTFISDWDK (242 aa)) the chain is Mitochondrial intermembrane. Pro residues predominate over residues 15–27 (PGVPGFPEPPSPP). 2 stretches are compositionally biased toward basic and acidic residues: residues 33–44 (GGDKNKPKDKWS) and 53–64 (RAAKAARELDQS). Positions 52 to 215 (ERAAKAAREL…QIRLKAAEHR (164 aa)) form a coiled coil. A helical transmembrane segment spans residues 243–260 (VTATVAGLTLLAVGVYTA). The Mitochondrial matrix segment spans residues 261–593 (KNATGVAGRY…LQPLLEGTQV (333 aa)). Residue 348-355 (GPPGTGKT) participates in ATP binding.

It belongs to the AAA ATPase family. In terms of assembly, can form homooligomers. Homodimer formation at the N-terminus may be regulated by ATP and is required for the interaction with the inner surface of the mitochondrial outer membrane and correct mitochondrial homeostasis.

Its subcellular location is the mitochondrion inner membrane. It is found in the mitochondrion matrix. The protein resides in the mitochondrion nucleoid. It carries out the reaction ATP + H2O = ADP + phosphate + H(+). In terms of biological role, essential for mitochondrial network organization, mitochondrial metabolism and cell growth at organism and cellular level. May play an important role in mitochondrial protein synthesis. May also participate in mitochondrial DNA replication. May bind to mitochondrial DNA D-loops and contribute to nucleoid stability. Required for enhanced channeling of cholesterol for hormone-dependent steroidogenesis. Involved in mitochondrial-mediated antiviral innate immunity. Required to protect mitochondria from the PERK-mediated unfolded protein response: specifically inhibits the activity of EIF2AK3/PERK at mitochondria-endoplasmic reticulum contact sites, thereby providing a safe haven for mitochondrial protein translation during endoplasmic reticulum stress. Ability to inhibit EIF2AK3/PERK is independent of its ATPase activity. Also involved in the mitochondrial DNA damage response by promoting signaling between damaged genomes and the mitochondrial membrane, leading to activation of the integrated stress response (ISR). The chain is ATPase family AAA domain-containing protein 3-A (atad3-a) from Xenopus laevis (African clawed frog).